Consider the following 295-residue polypeptide: Probable protein phosphatase 2C 54 (295 aa).

Positions 78 to 289 constitute a PPM-type phosphatase domain; sequence GHGVVSVMGR…ENINVIVIDL (212 aa). Mn(2+) contacts are provided by Asp112, Gly113, Asp228, and Glu280.

This sequence belongs to the PP2C family. It depends on Mg(2+) as a cofactor. Requires Mn(2+) as cofactor.

The catalysed reaction is O-phospho-L-seryl-[protein] + H2O = L-seryl-[protein] + phosphate. It carries out the reaction O-phospho-L-threonyl-[protein] + H2O = L-threonyl-[protein] + phosphate. The sequence is that of Probable protein phosphatase 2C 54 from Arabidopsis thaliana (Mouse-ear cress).